A 243-amino-acid chain; its full sequence is ABC transporter arginine-binding protein 1 (243 aa).

The first 19 residues, 1-19, serve as a signal peptide directing secretion; it reads MKKLVLAALLASFTFGASA.

Belongs to the bacterial solute-binding protein 3 family. In terms of assembly, the complex is composed of two ATP-binding proteins (ArtP), two transmembrane proteins (ArtM and ArtQ) and two solute-binding proteins (ArtJ and ArtI).

Its subcellular location is the periplasm. In terms of biological role, part of the ABC transporter complex ArtPIQMJ involved in arginine transport. Binds L-arginine with high affinity. In Escherichia coli (strain K12), this protein is ABC transporter arginine-binding protein 1 (artJ).